Here is a 408-residue protein sequence, read N- to C-terminus: Argininosuccinate synthase (408 aa).

Residues 9–17 (AYSGGLDTS) and alanine 36 each bind ATP. Residues tyrosine 87 and serine 92 each contribute to the L-citrulline site. ATP is bound at residue glycine 117. 3 residues coordinate L-aspartate: threonine 119, asparagine 123, and aspartate 124. Position 123 (asparagine 123) interacts with L-citrulline. 5 residues coordinate L-citrulline: arginine 127, serine 176, serine 185, glutamate 261, and tyrosine 273.

Belongs to the argininosuccinate synthase family. Type 1 subfamily. In terms of assembly, homotetramer.

The protein localises to the cytoplasm. It catalyses the reaction L-citrulline + L-aspartate + ATP = 2-(N(omega)-L-arginino)succinate + AMP + diphosphate + H(+). The protein operates within amino-acid biosynthesis; L-arginine biosynthesis; L-arginine from L-ornithine and carbamoyl phosphate: step 2/3. This is Argininosuccinate synthase from Deinococcus deserti (strain DSM 17065 / CIP 109153 / LMG 22923 / VCD115).